A 314-amino-acid polypeptide reads, in one-letter code: 4-hydroxy-3-methylbut-2-enyl diphosphate reductase (314 aa).

Cys18 lines the [4Fe-4S] cluster pocket. (2E)-4-hydroxy-3-methylbut-2-enyl diphosphate-binding residues include His47 and His80. 2 residues coordinate dimethylallyl diphosphate: His47 and His80. The isopentenyl diphosphate site is built by His47 and His80. Position 102 (Cys102) interacts with [4Fe-4S] cluster. A (2E)-4-hydroxy-3-methylbut-2-enyl diphosphate-binding site is contributed by His130. His130 serves as a coordination point for dimethylallyl diphosphate. His130 provides a ligand contact to isopentenyl diphosphate. Catalysis depends on Glu132, which acts as the Proton donor. Thr171 contacts (2E)-4-hydroxy-3-methylbut-2-enyl diphosphate. Cys201 lines the [4Fe-4S] cluster pocket. (2E)-4-hydroxy-3-methylbut-2-enyl diphosphate contacts are provided by Ser229, Ser230, Asn231, and Ser273. Dimethylallyl diphosphate is bound by residues Ser229, Ser230, Asn231, and Ser273. The isopentenyl diphosphate site is built by Ser229, Ser230, Asn231, and Ser273.

The protein belongs to the IspH family. [4Fe-4S] cluster serves as cofactor.

The enzyme catalyses isopentenyl diphosphate + 2 oxidized [2Fe-2S]-[ferredoxin] + H2O = (2E)-4-hydroxy-3-methylbut-2-enyl diphosphate + 2 reduced [2Fe-2S]-[ferredoxin] + 2 H(+). It catalyses the reaction dimethylallyl diphosphate + 2 oxidized [2Fe-2S]-[ferredoxin] + H2O = (2E)-4-hydroxy-3-methylbut-2-enyl diphosphate + 2 reduced [2Fe-2S]-[ferredoxin] + 2 H(+). It participates in isoprenoid biosynthesis; dimethylallyl diphosphate biosynthesis; dimethylallyl diphosphate from (2E)-4-hydroxy-3-methylbutenyl diphosphate: step 1/1. It functions in the pathway isoprenoid biosynthesis; isopentenyl diphosphate biosynthesis via DXP pathway; isopentenyl diphosphate from 1-deoxy-D-xylulose 5-phosphate: step 6/6. Catalyzes the conversion of 1-hydroxy-2-methyl-2-(E)-butenyl 4-diphosphate (HMBPP) into a mixture of isopentenyl diphosphate (IPP) and dimethylallyl diphosphate (DMAPP). Acts in the terminal step of the DOXP/MEP pathway for isoprenoid precursor biosynthesis. The chain is 4-hydroxy-3-methylbut-2-enyl diphosphate reductase from Phenylobacterium zucineum (strain HLK1).